Here is a 140-residue protein sequence, read N- to C-terminus: ATP synthase epsilon chain (140 aa).

This sequence belongs to the ATPase epsilon chain family. As to quaternary structure, F-type ATPases have 2 components, CF(1) - the catalytic core - and CF(0) - the membrane proton channel. CF(1) has five subunits: alpha(3), beta(3), gamma(1), delta(1), epsilon(1). CF(0) has three main subunits: a, b and c.

It localises to the cell inner membrane. Produces ATP from ADP in the presence of a proton gradient across the membrane. The chain is ATP synthase epsilon chain from Thermodesulfovibrio yellowstonii (strain ATCC 51303 / DSM 11347 / YP87).